The following is a 100-amino-acid chain: Esterase PE11 (100 aa).

Residues 4–94 (VTTRPDSIGE…TSYWLTELAN (91 aa)) enclose the PE domain.

It belongs to the mycobacterial PE family.

The protein resides in the secreted. The protein localises to the cell wall. The catalysed reaction is an acetyl ester + H2O = an aliphatic alcohol + acetate + H(+). It catalyses the reaction a butanoate ester + H2O = an aliphatic alcohol + butanoate + H(+). The enzyme catalyses an octanoate ester + H2O = an aliphatic alcohol + octanoate + H(+). Functionally, involved in cell wall lipids remodeling and in virulence. Restricts the biofilm growth and is essential for the optimal intracellular survival of M.tuberculosis. Shows esterase activity with a preference for short-chain esters, particularly pNP-acetate (C2) and pNP-butyrate (C4). Has weaker activity with pNP-octanoate (C8), pNP-laurate (C12) and pNP-myristate (C14). Shows weak long-chain triacylglycerol (TAG) hydrolase activity in vitro. Not necessary for PPE17 stability or for its localization on the mycobacterial surface. The polypeptide is Esterase PE11 (Mycobacterium tuberculosis (strain ATCC 25618 / H37Rv)).